The primary structure comprises 200 residues: NADH-quinone oxidoreductase subunit C (200 aa).

The protein belongs to the complex I 30 kDa subunit family. In terms of assembly, NDH-1 is composed of 14 different subunits. Subunits NuoB, C, D, E, F, and G constitute the peripheral sector of the complex.

It is found in the cell inner membrane. It catalyses the reaction a quinone + NADH + 5 H(+)(in) = a quinol + NAD(+) + 4 H(+)(out). In terms of biological role, NDH-1 shuttles electrons from NADH, via FMN and iron-sulfur (Fe-S) centers, to quinones in the respiratory chain. The immediate electron acceptor for the enzyme in this species is believed to be ubiquinone. Couples the redox reaction to proton translocation (for every two electrons transferred, four hydrogen ions are translocated across the cytoplasmic membrane), and thus conserves the redox energy in a proton gradient. The protein is NADH-quinone oxidoreductase subunit C of Burkholderia ambifaria (strain ATCC BAA-244 / DSM 16087 / CCUG 44356 / LMG 19182 / AMMD) (Burkholderia cepacia (strain AMMD)).